A 602-amino-acid polypeptide reads, in one-letter code: MEKEVIAYLDNETIIDSQSVKNTNLKEIYFDNSKESLEVIRHSCAHLMAQAIKSLYPEAKFFVGPVIEDGFYYDFRVESKIGEEDLVKIEKKMKELAEAKIEISKYEITKNEALAKFQNDDLKQEVLLRIPDGAVSIYKQGEFEDLCRGPHVPNTKFLRFFKLTRVAGAYLDGDEKREMLTRIYGTAFADKESLKEYLTIIEEAKKRDHRKLGTELKLFTFDDEIGGGLPIWLSNGARLRSKLEHMLYKIHRLRGYEPVRGPELLKADAWKISGHYANYKENMYFTQIDEQEYGIKPMNCVGHIKIYQSDVRSYRDLPLKFFEYGVVHRHEKSGVLHGLFRVREFTQDDAHIFCMPSQIKEQVLEILAFVDNLMKLFDFSYEMEISTKPEKAIGDDEIWEVATKALKEALDEQGLKYGIDEGGGAFYGPKIDIKITDALKRKWQCGTIQVDFNLPSRFKLEYTDSDNEKKQPVMLHRAILGSFERFIGILTEHCAGEFPFFIAPTAVGIVPIGEAHIAYAKEIQKELLELNIDSEVYEKNESLSKKIRIAEKQKLPMILVLGDDEVAKRSVALRDRRAKEQKNLSLDEFIKLVKEKMSEVHF.

Positions 208-499 are catalytic; that stretch reads DHRKLGTELK…LTEHCAGEFP (292 aa). Positions 300, 351, and 476 each coordinate Zn(2+).

The protein belongs to the class-II aminoacyl-tRNA synthetase family. In terms of assembly, homodimer. Zn(2+) is required as a cofactor.

The protein localises to the cytoplasm. The enzyme catalyses tRNA(Thr) + L-threonine + ATP = L-threonyl-tRNA(Thr) + AMP + diphosphate + H(+). In terms of biological role, catalyzes the attachment of threonine to tRNA(Thr) in a two-step reaction: L-threonine is first activated by ATP to form Thr-AMP and then transferred to the acceptor end of tRNA(Thr). Also edits incorrectly charged L-seryl-tRNA(Thr). The sequence is that of Threonine--tRNA ligase from Campylobacter jejuni (strain RM1221).